Reading from the N-terminus, the 78-residue chain is UPF0248 protein Msed_0897 (78 aa).

Belongs to the UPF0248 family.

This Metallosphaera sedula (strain ATCC 51363 / DSM 5348 / JCM 9185 / NBRC 15509 / TH2) protein is UPF0248 protein Msed_0897.